The chain runs to 507 residues: Arabinose import ATP-binding protein AraG (507 aa).

ABC transporter domains lie at 14–249 and 249–505; these read LRFN…MVGR and RDIQ…LPRT. Position 46-53 (46-53) interacts with ATP; it reads GENGAGKS.

Belongs to the ABC transporter superfamily. Arabinose importer (TC 3.A.1.2.2) family. In terms of assembly, the complex is composed of two ATP-binding proteins (AraG), two transmembrane proteins (AraH) and a solute-binding protein (AraF).

The protein localises to the cell inner membrane. It catalyses the reaction L-arabinose(out) + ATP + H2O = L-arabinose(in) + ADP + phosphate + H(+). Part of the ABC transporter complex AraFGH involved in arabinose import. Responsible for energy coupling to the transport system. This is Arabinose import ATP-binding protein AraG from Pseudomonas syringae pv. syringae (strain B728a).